The sequence spans 298 residues: Nucleoid occlusion protein (298 aa).

The H-T-H motif DNA-binding region spans Glu-152–Leu-171.

It belongs to the ParB family.

It is found in the cytoplasm. The protein localises to the nucleoid. In terms of biological role, effects nucleoid occlusion by binding relatively nonspecifically to DNA and preventing the assembly of the division machinery in the vicinity of the nucleoid, especially under conditions that disturb the cell cycle. It helps to coordinate cell division and chromosome segregation by preventing the formation of the Z ring through the nucleoid, which would cause chromosome breakage. The chain is Nucleoid occlusion protein from Lysinibacillus sphaericus (strain C3-41).